Consider the following 328-residue polypeptide: Dolichyl-diphosphooligosaccharide--protein glycosyltransferase subunit MAGT1 (328 aa).

The N-terminal stretch at 1–22 (MAALPVLVLVLLLACGGPRAAG) is a signal peptide. At 23-177 (QKRKEMVLSE…DVNIRVIRPP (155 aa)) the chain is on the extracellular side. A Thioredoxin domain is found at 40–168 (WTSKRSVIRM…LARWVADRTD (129 aa)). Asn64 is a glycosylation site (N-linked (GlcNAc...) asparagine). An intrachain disulfide couples Cys80 to Cys83. The helical transmembrane segment at 178–198 (NYAGPLMLGLLLAVIGGLVYL) threads the bilayer. At 199 to 211 (RGSNLDFLYNKTG) the chain is on the cytoplasmic side. The helical transmembrane segment at 212-232 (WAFAALCFVLAMTSGQMWNHI) threads the bilayer. Topologically, residues 233–257 (RGPPYAHKNPHTGQVNYIHGSSQAQ) are extracellular. Residues 258-278 (FVAETHIVLLFNGGVTLGMVL) form a helical membrane-spanning segment. The Cytoplasmic portion of the chain corresponds to 279–293 (LHEAATSDMDVGKRK). Residues 294–314 (IMCIAGIGLVVFFFSWLLSVF) form a helical membrane-spanning segment. Residues 315 to 328 (RSKYHGYPYSFLMS) lie on the Extracellular side of the membrane.

This sequence belongs to the OST3/OST6 family. Accessory component of the STT3B-containing form of the oligosaccharyltransferase (OST) complex. OST exists in two different complex forms which contain common core subunits RPN1, RPN2, OST48, OST4, DAD1 and TMEM258, either STT3A or STT3B as catalytic subunits, and form-specific accessory subunits. OST can form stable complexes with the Sec61 complex or with both the Sec61 and TRAP complexes.

Its subcellular location is the cell membrane. The protein resides in the endoplasmic reticulum. It localises to the endoplasmic reticulum membrane. It participates in protein modification; protein glycosylation. Its function is as follows. Accessory component of the STT3B-containing form of the N-oligosaccharyl transferase (OST) complex which catalyzes the transfer of a high mannose oligosaccharide from a lipid-linked oligosaccharide donor to an asparagine residue within an Asn-X-Ser/Thr consensus motif in nascent polypeptide chains. Involved in N-glycosylation of STT3B-dependent substrates. Specifically required for the glycosylation of a subset of acceptor sites that are near cysteine residues; in this function seems to act redundantly with TUSC3. In its oxidized form proposed to form transient mixed disulfides with a glycoprotein substrate to facilitate access of STT3B to the unmodified acceptor site. Also has oxidoreductase-independent functions in the STT3B-containing OST complex possibly involving substrate recognition. Could indirectly play a role in Mg(2+) transport in epithelial cells. The sequence is that of Dolichyl-diphosphooligosaccharide--protein glycosyltransferase subunit MAGT1 from Gallus gallus (Chicken).